We begin with the raw amino-acid sequence, 126 residues long: Activated RNA polymerase II transcriptional coactivator p15 (126 aa).

Residues 1 to 63 (MPKSKELVSS…QSSNRDENMF (63 aa)) form a disordered region. Positions 2–50 (PKSKELVSSSSSASDSDSEVDKKAKRKKQAAPEKPVKKQKTGESSKGAA) are regulatory. The segment covering 7–16 (LVSSSSSASD) has biased composition (low complexity). Over residues 31-44 (AAPEKPVKKQKTGE) the composition is skewed to basic and acidic residues. Low complexity predominate over residues 45–55 (SSKGAASSKQS). The tract at residues 76–100 (FKGKVLIDIREYWMDQEGEMKPGRK) is interaction with ssDNA.

The protein belongs to the transcriptional coactivator PC4 family.

The protein resides in the nucleus. In terms of biological role, general coactivator that functions cooperatively with TAFs and mediates functional interactions between upstream activators and the general transcriptional machinery. May be involved in stabilizing the multiprotein transcription complex. Binds single-stranded DNA. Also binds, in vitro, non-specifically to double-stranded DNA (ds DNA). In Gallus gallus (Chicken), this protein is Activated RNA polymerase II transcriptional coactivator p15 (SUB1).